The sequence spans 113 residues: Transcriptional regulator RamA (113 aa).

The 99-residue stretch at 9-107 folds into the HTH araC/xylS-type domain; the sequence is DTIVEWIDDN…NQPPGAYRKE (99 aa). DNA-binding regions (H-T-H motif) lie at residues 26-47 and 74-97; these read DDIARHAGYSKWHLQRLFLQYK and VYDICLKYGFDSQQTFTRVFTRTF.

In terms of assembly, monomer. Interacts with the C-terminus of RNAP subunit RpoA when part of class I or class II promoter complexes. Also interacts with sigma-70/RpoD in class II promoter complexes.

Its function is as follows. Transcriptional regulator. Binds to regulatory regions of target genes, including its own gene, efflux pump operon acrAB, antisense RNA gene micF, and various genes involved in lipid A biosynthesis, including lpxO and lpxL-2. Regulates expression of many genes, perhaps including its own; activates various lipid A biosynthetic genes, and as a result of activating acrAB, confers multidrug resistance. Plays a role in virulence and survival in host cells. The protein is Transcriptional regulator RamA of Klebsiella pneumoniae subsp. pneumoniae (strain HS11286).